We begin with the raw amino-acid sequence, 726 residues long: Catalase-peroxidase (726 aa).

A disordered region spans residues 1 to 34 (MSMSDDTHNSLSTGKCPFHQGSHDRSAGAGTSSH). A cross-link (tryptophyl-tyrosyl-methioninium (Trp-Tyr) (with M-252)) is located at residues 105–226 (WHGAGTYRSV…LGATEMGLIY (122 aa)). Catalysis depends on His-106, which acts as the Proton acceptor. Residues 226–252 (YVNPEGPDHSGEPLSAAAAIRATFGNM) constitute a cross-link (tryptophyl-tyrosyl-methioninium (Tyr-Met) (with W-105)). His-267 lines the heme b pocket.

This sequence belongs to the peroxidase family. Peroxidase/catalase subfamily. In terms of assembly, homodimer or homotetramer. Requires heme b as cofactor. Post-translationally, formation of the three residue Trp-Tyr-Met cross-link is important for the catalase, but not the peroxidase activity of the enzyme.

It catalyses the reaction H2O2 + AH2 = A + 2 H2O. It carries out the reaction 2 H2O2 = O2 + 2 H2O. Bifunctional enzyme with both catalase and broad-spectrum peroxidase activity. This chain is Catalase-peroxidase, found in Citrobacter koseri (strain ATCC BAA-895 / CDC 4225-83 / SGSC4696).